The primary structure comprises 361 residues: Peptidyl-prolyl cis-trans isomerase CYP40 (361 aa).

The PPIase cyclophilin-type domain occupies 7–172 (FMDISIGGEL…QDVVIHDCGE (166 aa)). TPR repeat units lie at residues 212-245 (VDFV…LDIC) and 298-331 (VKAL…EPND).

It belongs to the cyclophilin-type PPIase family. Expressed at low levels in seedlings, roots, shoots, leaves, stems, inflorescences, flowers and siliques, with highest levels dividing tissues.

Its subcellular location is the cytoplasm. The enzyme catalyses [protein]-peptidylproline (omega=180) = [protein]-peptidylproline (omega=0). Binds cyclosporin A (CsA). CsA mediates some of its effects via an inhibitory action on PPIase. PPIases accelerate the folding of proteins. It catalyzes the cis-trans isomerization of proline imidic peptide bonds in oligopeptides. Involved in promoting the expression of the juvenile phase of vegetative development, and, to a lower extent, in regulating the positioning of floral buds, floral morphogenesis and the expression of HSPs. Collaboratively with RBL and ULT1, influences floral meristem (FM) determinacy in an AGAMOUS and SUPERMAN-dependent manner, thus contributing to the floral developmental homeostasis. The sequence is that of Peptidyl-prolyl cis-trans isomerase CYP40 from Arabidopsis thaliana (Mouse-ear cress).